Reading from the N-terminus, the 397-residue chain is MARAGARGLLGGRRPPGLRLALALRLALLLARPPSGRAGAPEAQGPAAPGTTAPEGGDRCRGYYDVMGQWDPPFNCSSGAYSFCCGTCGYRFCCHDGPRRLDQSRCSNYDTPAWVQTGRPPARARDTAAPRDPGRERSHTAVYAVCGVAALLVLAGIGARLGLERAHSPRARRTVTRALTELLKQPGPQEPLPPTLGPPLGGCVQVQMGDGLPRGSPHNSADKKRLNNAPRGSAAPGPPRGPRLQGGGSLTLQPDYAKYATFKAAALKAAEAAPRDFCQRFPALEPSPRQPPARAPRPSPDLPAPLDACPWAPPVYAPPAAPGPYAAWTSSRPARPAPLSHPTARAFQVPRRPGHAARRQFSVKMPETFNPQLPGLYGSAGRGSRYLRTNSKTEVTV.

The signal sequence occupies residues 1–38; it reads MARAGARGLLGGRRPPGLRLALALRLALLLARPPSGRA. At 39 to 138 the chain is on the extracellular side; sequence GAPEAQGPAA…APRDPGRERS (100 aa). An N-linked (GlcNAc...) asparagine glycan is attached at Asn75. Residues 117-136 are disordered; sequence TGRPPARARDTAAPRDPGRE. Over residues 123–136 the composition is skewed to basic and acidic residues; sequence RARDTAAPRDPGRE. The helical transmembrane segment at 139-159 threads the bilayer; the sequence is HTAVYAVCGVAALLVLAGIGA. The Cytoplasmic segment spans residues 160–397; that stretch reads RLGLERAHSP…RTNSKTEVTV (238 aa). Disordered stretches follow at residues 182–250 and 281–303; these read LLKQ…GGSL and FPAL…PDLP. 2 stretches are compositionally biased toward pro residues: residues 188-197 and 288-303; these read PQEPLPPTLG and PRQP…PDLP.

It belongs to the shisa family. In terms of assembly, interacts with AMPAR subunits GRIA1 and GRIA2.

Its subcellular location is the membrane. Its function is as follows. May regulate trafficking and current kinetics of AMPA-type glutamate receptor (AMPAR) at synapses. This is Protein shisa-8 from Homo sapiens (Human).